We begin with the raw amino-acid sequence, 308 residues long: Bifunctional protein FolD (308 aa).

Residue 170 to 172 participates in NADP(+) binding; sequence GKG.

Belongs to the tetrahydrofolate dehydrogenase/cyclohydrolase family. In terms of assembly, homodimer.

The enzyme catalyses (6R)-5,10-methylene-5,6,7,8-tetrahydrofolate + NADP(+) = (6R)-5,10-methenyltetrahydrofolate + NADPH. It catalyses the reaction (6R)-5,10-methenyltetrahydrofolate + H2O = (6R)-10-formyltetrahydrofolate + H(+). It participates in one-carbon metabolism; tetrahydrofolate interconversion. Catalyzes the oxidation of 5,10-methylenetetrahydrofolate to 5,10-methenyltetrahydrofolate and then the hydrolysis of 5,10-methenyltetrahydrofolate to 10-formyltetrahydrofolate. The sequence is that of Bifunctional protein FolD from Pyrobaculum calidifontis (strain DSM 21063 / JCM 11548 / VA1).